A 197-amino-acid polypeptide reads, in one-letter code: dITP/XTP pyrophosphatase (197 aa).

Residue 8–13 coordinates substrate; the sequence is TGNVGK. Positions 40 and 69 each coordinate Mg(2+). Residue aspartate 69 is the Proton acceptor of the active site. Substrate contacts are provided by residues serine 70, 154-157, lysine 177, and 182-183; these read FGYD and HR.

Belongs to the HAM1 NTPase family. As to quaternary structure, homodimer. Mg(2+) serves as cofactor. It depends on Mn(2+) as a cofactor. The cofactor is Ni(2+).

The enzyme catalyses XTP + H2O = XMP + diphosphate + H(+). It catalyses the reaction dITP + H2O = dIMP + diphosphate + H(+). The catalysed reaction is ITP + H2O = IMP + diphosphate + H(+). Functionally, pyrophosphatase that catalyzes the hydrolysis of nucleoside triphosphates to their monophosphate derivatives, with a high preference for the non-canonical purine nucleotides XTP (xanthosine triphosphate), dITP (deoxyinosine triphosphate) and ITP. Can also efficiently hydrolyze 2'-deoxy-N-6-hydroxylaminopurine triphosphate (dHAPTP). Seems to function as a house-cleaning enzyme that removes non-canonical purine nucleotides from the nucleotide pool, thus preventing their incorporation into DNA/RNA and avoiding chromosomal lesions. To a much lesser extent, is also able to hydrolyze GTP, dGTP and dUTP, but shows very low activity toward the canonical nucleotides dATP, dCTP and dTTP and toward 8-oxo-dGTP, purine deoxyribose triphosphate, 2-aminopurine deoxyribose triphosphate and 2,6-diaminopurine deoxyribose triphosphate. In terms of biological role, genetic interactions among priB, dam, lexA, nagC, polA, rdgB, rdgB, rep and uup link the PriA-PriB replication restart pathway to DNA double-strand break repair. In Escherichia coli (strain K12), this protein is dITP/XTP pyrophosphatase.